The sequence spans 480 residues: Glycogen synthase (480 aa).

Lys15 contacts ADP-alpha-D-glucose.

This sequence belongs to the glycosyltransferase 1 family. Bacterial/plant glycogen synthase subfamily.

It catalyses the reaction [(1-&gt;4)-alpha-D-glucosyl](n) + ADP-alpha-D-glucose = [(1-&gt;4)-alpha-D-glucosyl](n+1) + ADP + H(+). Its pathway is glycan biosynthesis; glycogen biosynthesis. Synthesizes alpha-1,4-glucan chains using ADP-glucose. The polypeptide is Glycogen synthase (Desulforamulus reducens (strain ATCC BAA-1160 / DSM 100696 / MI-1) (Desulfotomaculum reducens)).